The following is a 260-amino-acid chain: Sphinganine C4-monooxygenase 1 (260 aa).

3 helical membrane-spanning segments follow: residues 11 to 31 (LLGT…YVAL), 55 to 75 (SVVK…ILLF), and 92 to 112 (FLVL…WQYF). The 137-residue stretch at 99–235 (FVTAMIVLDT…FVMWDRILGT (137 aa)) folds into the Fatty acid hydroxylase domain. Residues 114–118 (HRYMH) carry the Histidine box-1 motif. Positions 128–132 (HSQHH) match the Histidine box-2 motif. The Histidine box-3 signature appears at 207–213 (YHDIHHQ).

This sequence belongs to the sterol desaturase family. The cofactor is Fe cation. In terms of tissue distribution, ubiquitous, with higher levels in flowers and roots.

The protein localises to the endoplasmic reticulum membrane. It carries out the reaction a dihydroceramide + 2 Fe(II)-[cytochrome b5] + O2 + 2 H(+) = a phytoceramide + 2 Fe(III)-[cytochrome b5] + H2O. Its pathway is membrane lipid metabolism; sphingolipid biosynthesis. Its function is as follows. Involved in sphingolipid trihydroxy long-chain base (4-hydroxysphinganine) biosynthesis. Can use C18- and C20-sphinganine as substrates to produce C18- and C20-phytosphinganines (D-ribo-2-amino-1,3,4-trihydroxyoctadecane and -eicosane). In Arabidopsis thaliana (Mouse-ear cress), this protein is Sphinganine C4-monooxygenase 1 (SBH1).